The following is a 359-amino-acid chain: Holliday junction branch migration complex subunit RuvB (359 aa).

Residues 1–22 (MAIVSSNAEPSKGAPRPKPSRV) form a disordered region. Residues 13–204 (GAPRPKPSRV…FGLIQRLEFY (192 aa)) are large ATPase domain (RuvB-L). Positions 43, 44, 85, 88, 89, 90, 194, 204, and 241 each coordinate ATP. Threonine 89 is a Mg(2+) binding site. The segment at 205–276 (GQEDLQAIVM…LVDEALTLHR (72 aa)) is small ATPAse domain (RuvB-S). Residues 279-359 (GKGLDASDRR…GWPADEGDAA (81 aa)) are head domain (RuvB-H). DNA-binding residues include arginine 334 and arginine 339.

The protein belongs to the RuvB family. As to quaternary structure, homohexamer. Forms an RuvA(8)-RuvB(12)-Holliday junction (HJ) complex. HJ DNA is sandwiched between 2 RuvA tetramers; dsDNA enters through RuvA and exits via RuvB. An RuvB hexamer assembles on each DNA strand where it exits the tetramer. Each RuvB hexamer is contacted by two RuvA subunits (via domain III) on 2 adjacent RuvB subunits; this complex drives branch migration. In the full resolvosome a probable DNA-RuvA(4)-RuvB(12)-RuvC(2) complex forms which resolves the HJ.

It localises to the cytoplasm. The enzyme catalyses ATP + H2O = ADP + phosphate + H(+). In terms of biological role, the RuvA-RuvB-RuvC complex processes Holliday junction (HJ) DNA during genetic recombination and DNA repair, while the RuvA-RuvB complex plays an important role in the rescue of blocked DNA replication forks via replication fork reversal (RFR). RuvA specifically binds to HJ cruciform DNA, conferring on it an open structure. The RuvB hexamer acts as an ATP-dependent pump, pulling dsDNA into and through the RuvAB complex. RuvB forms 2 homohexamers on either side of HJ DNA bound by 1 or 2 RuvA tetramers; 4 subunits per hexamer contact DNA at a time. Coordinated motions by a converter formed by DNA-disengaged RuvB subunits stimulates ATP hydrolysis and nucleotide exchange. Immobilization of the converter enables RuvB to convert the ATP-contained energy into a lever motion, pulling 2 nucleotides of DNA out of the RuvA tetramer per ATP hydrolyzed, thus driving DNA branch migration. The RuvB motors rotate together with the DNA substrate, which together with the progressing nucleotide cycle form the mechanistic basis for DNA recombination by continuous HJ branch migration. Branch migration allows RuvC to scan DNA until it finds its consensus sequence, where it cleaves and resolves cruciform DNA. This chain is Holliday junction branch migration complex subunit RuvB, found in Synechococcus sp. (strain CC9311).